A 249-amino-acid polypeptide reads, in one-letter code: Formylaminopyrimidine import ATP-binding protein ThiZ (249 aa).

The 223-residue stretch at 6–228 (LTFEEVSFAY…RRKMETTEKM (223 aa)) folds into the ABC transporter domain. Residue 39-46 (AKSGSGKS) coordinates ATP.

This sequence belongs to the ABC transporter superfamily. The complex is likely composed of an ATP-binding protein (ThiZ), a transmembrane protein (ThiX) and a solute-binding protein (ThiY).

It is found in the cell membrane. It functions in the pathway cofactor biosynthesis; thiamine diphosphate biosynthesis. Functionally, participates in a thiamine pyrimidine salvage pathway as part of the ABC transporter complex ThiXYZ involved in the import of thiamine degradation products such as the formylaminopyrimidine N-formyl-4-amino-5-aminomethyl-2-methylpyrimidine (FAMP). Is likely responsible for energy coupling to the transport system. The chain is Formylaminopyrimidine import ATP-binding protein ThiZ from Halalkalibacterium halodurans (strain ATCC BAA-125 / DSM 18197 / FERM 7344 / JCM 9153 / C-125) (Bacillus halodurans).